Reading from the N-terminus, the 1180-residue chain is Chitin synthase 6 (1180 aa).

The next 2 membrane-spanning stretches (helical) occupy residues 108 to 128 (FTIC…IIAF) and 374 to 394 (LLLA…IAAL). The N-linked (GlcNAc...) asparagine glycan is linked to asparagine 737. 3 helical membrane-spanning segments follow: residues 762–782 (FIVF…VYLV), 795–815 (IPYI…ILFL), and 822–842 (YIGW…FLPI). Positions 1118 to 1175 (DPTDEEIKSAVQTYLANQPSLMNVTKRSVREALVAAFPNAELSYKKSMINKAIDDTLS) constitute a DEK-C domain.

This sequence belongs to the chitin synthase family. Class V subfamily.

It localises to the cell membrane. It is found in the cytoplasmic vesicle membrane. The enzyme catalyses [(1-&gt;4)-N-acetyl-beta-D-glucosaminyl](n) + UDP-N-acetyl-alpha-D-glucosamine = [(1-&gt;4)-N-acetyl-beta-D-glucosaminyl](n+1) + UDP + H(+). Polymerizes chitin, a structural polymer of the cell wall and septum, by transferring the sugar moiety of UDP-GlcNAc to the non-reducing end of the growing chitin polymer. Plays a crucial role during infection and allows the fungus to overcome the resistance of the plant that checks growth of the pathogen and eventually eliminates it. This chain is Chitin synthase 6, found in Mycosarcoma maydis (Corn smut fungus).